We begin with the raw amino-acid sequence, 83 residues long: uncharacterized protein (83 aa).

This is an uncharacterized protein from Escherichia phage 186 (Bacteriophage 186).